The primary structure comprises 444 residues: Tubulin gamma chain (444 aa).

144–150 (SGGTGSG) is a binding site for GTP.

It belongs to the tubulin family.

It is found in the cytoplasm. Its subcellular location is the cytoskeleton. It localises to the microtubule organizing center. The protein resides in the centrosome. The protein localises to the cell junction. It is found in the hemidesmosome. Its subcellular location is the adherens junction. In terms of biological role, tubulin is the major constituent of microtubules. The gamma chain is found at microtubule organizing centers (MTOC) such as the spindle poles or the centrosome, suggesting that it is involved in the minus-end nucleation of microtubule assembly. The chain is Tubulin gamma chain (tbg-1) from Caenorhabditis elegans.